Consider the following 382-residue polypeptide: Mannitol-1-phosphate 5-dehydrogenase (382 aa).

3-14 (ALHFGAGNIGRG) serves as a coordination point for NAD(+).

It belongs to the mannitol dehydrogenase family.

The catalysed reaction is D-mannitol 1-phosphate + NAD(+) = beta-D-fructose 6-phosphate + NADH + H(+). The chain is Mannitol-1-phosphate 5-dehydrogenase from Salmonella enteritidis PT4 (strain P125109).